The sequence spans 214 residues: Type 4 apparatus protein DotN (214 aa).

The Zn(2+) site is built by cysteine 52, cysteine 55, cysteine 84, and cysteine 87.

As to quaternary structure, the T4BSS is a complex nanomachine composed of several subcomplexes. This subunit is part of the Type IV Coupling Complex (T4CC), a subcomplex composed of the DotLMNYZ core and the IcmSW-LvgA adapter subunits, linked by the C-terminal tail of DotL. Six DotLMNYZ hetero-pentameric units may assemble into a hexameric nanomachine, forming an inner membrane channel for effectors to pass through. Interacts directly with DotL. Interacts with DotZ.

The protein resides in the cytoplasm. Component of the Dot/Icm type IVB secretion system (T4BSS), which is used to inject bacterial effector proteins into eukaryotic host cells. Part of a subcomplex which recruits effector proteins and delivers them to the core transmembrane subcomplex. This is Type 4 apparatus protein DotN from Legionella pneumophila subsp. pneumophila (strain Philadelphia 1 / ATCC 33152 / DSM 7513).